Consider the following 361-residue polypeptide: Peptide chain release factor 1 (361 aa).

Q236 carries the N5-methylglutamine modification. Positions N285–R309 are enriched in basic and acidic residues. The interval N285–N312 is disordered.

It belongs to the prokaryotic/mitochondrial release factor family. Post-translationally, methylated by PrmC. Methylation increases the termination efficiency of RF1.

The protein localises to the cytoplasm. Functionally, peptide chain release factor 1 directs the termination of translation in response to the peptide chain termination codons UAG and UAA. This chain is Peptide chain release factor 1, found in Methylobacterium radiotolerans (strain ATCC 27329 / DSM 1819 / JCM 2831 / NBRC 15690 / NCIMB 10815 / 0-1).